The chain runs to 221 residues: MLDQKELLCLLQLASPILPVGAYSYSEGLETLVEKGIISNSASLNDWLERSLCQGSIRLETAVLLRVYRCFCQEDFTKLNYWDNWLSATRETAELRQQSWQMGRSLLNLLRELAPARDNLPEQANYATAFAIGASHWQIGEELAVLGYLHSWASNLINAGLRLIPLGQTLGQSLLIGLQPSLLTATADIISLADENLSSWSWGLSFASMNHETQYSRLFRS.

This sequence belongs to the UreF family. UreD, UreF and UreG form a complex that acts as a GTP-hydrolysis-dependent molecular chaperone, activating the urease apoprotein by helping to assemble the nickel containing metallocenter of UreC. The UreE protein probably delivers the nickel.

It is found in the cytoplasm. In terms of biological role, required for maturation of urease via the functional incorporation of the urease nickel metallocenter. The protein is Urease accessory protein UreF of Microcystis aeruginosa (strain NIES-843 / IAM M-2473).